Reading from the N-terminus, the 116-residue chain is uncharacterized protein (116 aa).

2 helical membrane passes run 55–77 and 87–109; these read LSYS…LYSF and FSYG…YAAL.

The protein localises to the membrane. This is an uncharacterized protein from Saccharomyces cerevisiae (strain ATCC 204508 / S288c) (Baker's yeast).